We begin with the raw amino-acid sequence, 632 residues long: PTS system mannitol-specific EIICBA component (632 aa).

Positions 12–341 (FGRFLSNMIM…ILLKYDFNTI (330 aa)) constitute a PTS EIIC type-2 domain. 6 consecutive transmembrane segments (helical) span residues 24-45 (ISIF…WQPN), 50-70 (QLIS…TGGS), 134-155 (SLAI…PFIE), 165-185 (IQII…EPAK), 273-292 (LILG…GGLI), and 313-334 (FSNI…SILL). In terms of domain architecture, PTS EIIB type-2 spans 374 to 469 (KTIIVACDAG…KLVENMVFLY (96 aa)). The active-site Phosphocysteine intermediate; for EIIB activity is the Cys380. A Phosphocysteine; by EIIA modification is found at Cys380. A PTS EIIA type-2 domain is found at 488–630 (FQLNEENIIL…KEALSLLTME (143 aa)). His548 serves as the catalytic Tele-phosphohistidine intermediate; for EIIA activity. At His548 the chain carries Phosphohistidine; by HPr.

As to quaternary structure, homodimer. An intramolecular phosphotransfer takes places between His-548 and Cys-380.

Its subcellular location is the cell inner membrane. It catalyses the reaction D-mannitol(out) + N(pros)-phospho-L-histidyl-[protein] = D-mannitol 1-phosphate(in) + L-histidyl-[protein]. In terms of biological role, the phosphoenolpyruvate-dependent sugar phosphotransferase system (sugar PTS), a major carbohydrate active transport system, catalyzes the phosphorylation of incoming sugar substrates concomitantly with their translocation across the cell membrane. This system is involved in D-mannitol transport. This is PTS system mannitol-specific EIICBA component (mtlA) from Buchnera aphidicola subsp. Acyrthosiphon pisum (strain APS) (Acyrthosiphon pisum symbiotic bacterium).